The chain runs to 387 residues: Patatin-03 (387 aa).

The N-terminal stretch at 1–23 is a signal peptide; that stretch reads MATTKSVLVLIFMILATTSSTFA. A PNPLA domain is found at 32 to 230; that stretch reads LSIDGGGIKG…TVADPALLSV (199 aa). The GXGXXG motif lies at 36–41; the sequence is GGGIKG. Positions 75–79 match the GXSXG motif; the sequence is GTSTG. Residue S77 is the Nucleophile of the active site. N-linked (GlcNAc...) asparagine glycosylation is found at N115 and N203. The active-site Proton acceptor is the D216. A DGA/G motif is present at residues 216–218; sequence DGA.

Belongs to the patatin family. Tuber.

It localises to the vacuole. Functionally, probable lipolytic acyl hydrolase (LAH), an activity which is thought to be involved in the response of tubers to pathogens. The chain is Patatin-03 from Solanum tuberosum (Potato).